A 742-amino-acid polypeptide reads, in one-letter code: Synaptic vesicle glycoprotein 2A (742 aa).

The segment at 1–57 (MEEGFRDRAAFIRGAKDIAKEVKKHAAKKVVKGLDRVQDEYSRRSYSRFEEEEDDDD) is interaction with SYT1. Residues 1 to 169 (MEEGFRDRAA…GHGRFQWTLY (169 aa)) are Cytoplasmic-facing. A compositionally biased stretch (basic and acidic residues) spans 40–49 (EYSRRSYSRF). Positions 40–145 (EYSRRSYSRF…RGEAQRRKDR (106 aa)) are disordered. Phosphoserine occurs at positions 80 and 81. A Phosphothreonine modification is found at Thr84. The segment covering 122–137 (VRGGLSDGEGPPGGRG) has biased composition (gly residues). Ser127 carries the phosphoserine modification. A helical transmembrane segment spans residues 170-190 (FVLGLALMADGVEVFVVGFVL). The Extracellular portion of the chain corresponds to 191–205 (PSAEKDMCLSDSNKG). The helical transmembrane segment at 206–226 (MLGLIVYLGMMVGAFLWGGLA) threads the bilayer. Topologically, residues 227–233 (DRLGRRQ) are cytoplasmic. The helical transmembrane segment at 234-254 (CLLISLSVNSVFAFFSSFVQG) threads the bilayer. Residues 255 to 262 (YGTFLFCR) lie on the Extracellular side of the membrane. A helical transmembrane segment spans residues 263 to 283 (LLSGVGIGGSIPIVFSYFSEF). The Cytoplasmic portion of the chain corresponds to 284-294 (LAQEKRGEHLS). A helical transmembrane segment spans residues 295 to 315 (WLCMFWMIGGVYAAAMAWAII). Over 316–334 (PHYGWSFQMGSAYQFHSWR) the chain is Extracellular. The chain crosses the membrane as a helical span at residues 335 to 355 (VFVLVCAFPSVFAIGALTTQP). The Cytoplasmic portion of the chain corresponds to 356-447 (ESPRFFLENG…CFSPEYRRIT (92 aa)). Ser393 is subject to Phosphoserine. Residues 448-468 (LMMMGVWFTMSFSYYGLTVWF) traverse the membrane as a helical segment. Residues 469–598 (PDMIRHLQAV…GTGEGAYMVY (130 aa)) lie on the Extracellular side of the membrane. Tyr480 bears the Phosphotyrosine mark. Asn498 and Asn548 each carry an N-linked (GlcNAc...) asparagine glycan. A glycan (N-linked (GlcNAc...) asparagine; alternate) is linked at Asn573. Asn573 is a glycosylation site (N-linked (HexNAc...) asparagine; alternate). A helical transmembrane segment spans residues 599-619 (FVSFLGTLAVLPGNIVSALLM). At 620–626 (DKIGRLR) the chain is on the cytoplasmic side. A helical membrane pass occupies residues 627 to 647 (MLAGSSVLSCVSCFFLSFGNS). Residues 648 to 651 (ESAM) are Extracellular-facing. Residues 652 to 672 (IALLCLFGGVSIASWNALDVL) traverse the membrane as a helical segment. The Cytoplasmic segment spans residues 673 to 685 (TVELYPSDKRTTA). A helical membrane pass occupies residues 686 to 708 (FGFLNALCKLAAVLGISIFTSFV). At 709-712 (GITK) the chain is on the extracellular side. Residues 713-731 (AAPILFASAALALGSSLAL) traverse the membrane as a helical segment. Residues 732–742 (KLPETRGQVLQ) lie on the Cytoplasmic side of the membrane.

The protein belongs to the major facilitator superfamily. As to quaternary structure, interacts with SYT1/synaptotagmin-1 in a calcium-dependent manner. Binds the adapter protein complex AP-2. (Microbial infection) Interacts with C.botulinum neurotoxin type A1 and type A2 (BoNT/A, botA). Interaction is improved by glycosylation of SV2. In terms of assembly, (Microbial infection) Copurifies with C.botulinum neurotoxin type B (BoNT/B, botB) and synaptotagmin 1 (SYT1). Interaction does not require glycosylation of SV2 or SYT1 proteins. Another group finds only copurification with SYT1 and SYT2. As to quaternary structure, (Microbial infection) Interacts with C.botulinum neurotoxin type E (BoNT/E). Interaction requires glycosylation of SV2 proteins. (Microbial infection) Copurifies with C.botulinum neurotoxin type F (BoNT/F) and synaptotagmin 1 (SYT2). Another group finds only copurification with BoNT/F. Interaction requires SV2 glycosylation. Phosphorylation by CK1 of the N-terminal cytoplasmic domain regulates interaction with SYT1. In terms of processing, N-glycosylated, on at least 3 residues. As to expression, widely expressed throughout the brain (at protein level). Expressed by neural and endocrine cells of brain and spinal cord.

Its subcellular location is the presynapse. The protein resides in the cytoplasmic vesicle. It localises to the secretory vesicle. It is found in the synaptic vesicle membrane. Functionally, plays a role in the control of regulated secretion in neural and endocrine cells, enhancing selectively low-frequency neurotransmission. Positively regulates vesicle fusion by maintaining the readily releasable pool of secretory vesicles. Its function is as follows. (Microbial infection) Receptor for C.botulinum neurotoxin type A (BoNT/A, botA); the toxin binds via extracellular loop 4. Restores uptake of BoNT/A in mouse cells that are deleted for SV2 receptor. Glycosylation of Asn-573 is not essential for receptor activity, but enhances uptake. Also serves as a receptor for the closely related C.botulinum neurotoxin type A2; glycosylation is not essential but enhances the interaction. Possible receptor for C.botulinum neurotoxin type D (BoNT/D, botD); BoNT/D does not bind to extracellular loop 4 as do BoNT/A and BoNT/E, nor to loop 1 or loop 3. Another group does not find a convincing interaction with SV2. In terms of biological role, (Microbial infection) Receptor for C.botulinum neurotoxin type E (BoNT/E); the toxin probably binds via extracellular loop 4 and requires glycosylation of Asn-573. Restores uptake of BoNT/E in mouse cells that are deleted for SV2 receptor. Functionally, (Microbial infection) Receptor for C.botulinum neurotoxin type F (BoNT/F). Binding requires glycosylation of Asn-573. In Rattus norvegicus (Rat), this protein is Synaptic vesicle glycoprotein 2A (Sv2a).